The primary structure comprises 244 residues: rRNA adenine N-6-methyltransferase (244 aa).

Positions 11, 13, 38, 59, 84, and 101 each coordinate S-adenosyl-L-methionine.

Belongs to the class I-like SAM-binding methyltransferase superfamily. rRNA adenine N(6)-methyltransferase family.

The enzyme catalyses adenosine(2085) in 23S rRNA + 2 S-adenosyl-L-methionine = N(6)-dimethyladenosine(2085) in 23S rRNA + 2 S-adenosyl-L-homocysteine + 2 H(+). In terms of biological role, this protein produces a dimethylation of the adenine residue at position 2085 in 23S rRNA, resulting in reduced affinity between ribosomes and macrolide-lincosamide-streptogramin B antibiotics. Is involved in erythromycin resistance. The polypeptide is rRNA adenine N-6-methyltransferase (ermGT) (Limosilactobacillus reuteri (Lactobacillus reuteri)).